The chain runs to 157 residues: MARKPDPGRRIVADNRKARFNYEITDTVEAGIALTGTEVKSLRGGKATIGEAYAGPSGDEFFLFNAYIPEYLEANRFNHETKRPRRLLLHRRQINKFLGATQREGYTVIPLKIYFNERGRAKVELGLGRGKKLHDKRETAKERDWQRDRARLLRDKG.

It belongs to the SmpB family.

It localises to the cytoplasm. Functionally, required for rescue of stalled ribosomes mediated by trans-translation. Binds to transfer-messenger RNA (tmRNA), required for stable association of tmRNA with ribosomes. tmRNA and SmpB together mimic tRNA shape, replacing the anticodon stem-loop with SmpB. tmRNA is encoded by the ssrA gene; the 2 termini fold to resemble tRNA(Ala) and it encodes a 'tag peptide', a short internal open reading frame. During trans-translation Ala-aminoacylated tmRNA acts like a tRNA, entering the A-site of stalled ribosomes, displacing the stalled mRNA. The ribosome then switches to translate the ORF on the tmRNA; the nascent peptide is terminated with the 'tag peptide' encoded by the tmRNA and targeted for degradation. The ribosome is freed to recommence translation, which seems to be the essential function of trans-translation. In Methylobacterium nodulans (strain LMG 21967 / CNCM I-2342 / ORS 2060), this protein is SsrA-binding protein.